Here is an 885-residue protein sequence, read N- to C-terminus: Isoleucine--tRNA ligase (885 aa).

A 'HIGH' region motif is present at residues 59–69 (PYANGDLHIGH). Glu550 serves as a coordination point for L-isoleucyl-5'-AMP. The 'KMSKS' region signature appears at 591 to 595 (KMSKS). Lys594 lines the ATP pocket. Cys861, Cys864, Cys877, and Cys880 together coordinate Zn(2+).

The protein belongs to the class-I aminoacyl-tRNA synthetase family. IleS type 1 subfamily. Monomer. Zn(2+) serves as cofactor.

The protein localises to the cytoplasm. The catalysed reaction is tRNA(Ile) + L-isoleucine + ATP = L-isoleucyl-tRNA(Ile) + AMP + diphosphate. Its function is as follows. Catalyzes the attachment of isoleucine to tRNA(Ile). As IleRS can inadvertently accommodate and process structurally similar amino acids such as valine, to avoid such errors it has two additional distinct tRNA(Ile)-dependent editing activities. One activity is designated as 'pretransfer' editing and involves the hydrolysis of activated Val-AMP. The other activity is designated 'posttransfer' editing and involves deacylation of mischarged Val-tRNA(Ile). In Mycoplasma mobile (strain ATCC 43663 / 163K / NCTC 11711) (Mesomycoplasma mobile), this protein is Isoleucine--tRNA ligase.